Here is a 142-residue protein sequence, read N- to C-terminus: Hemoglobin subunit alpha (142 aa).

A Globin domain is found at 2-142 (VLSATDKSNV…VSTVLTSKYR (141 aa)). A Phosphoserine modification is found at Ser-4. Residues Lys-8 and Lys-12 each carry the N6-succinyllysine modification. Lys-17 carries the N6-acetyllysine; alternate modification. Lys-17 bears the N6-succinyllysine; alternate mark. Tyr-25 bears the Phosphotyrosine mark. At Ser-36 the chain carries Phosphoserine. Position 41 is an N6-succinyllysine (Lys-41). At Ser-50 the chain carries Phosphoserine. Position 59 (His-59) interacts with O2. His-88 is a heme b binding site. Ser-103 is subject to Phosphoserine. A Phosphothreonine modification is found at Thr-109. Position 125 is a phosphoserine (Ser-125). 2 positions are modified to phosphothreonine: Thr-135 and Thr-138. A Phosphoserine modification is found at Ser-139.

This sequence belongs to the globin family. In terms of assembly, heterotetramer of two alpha chains and two beta chains. Red blood cells.

In terms of biological role, involved in oxygen transport from the lung to the various peripheral tissues. Its function is as follows. Hemopressin acts as an antagonist peptide of the cannabinoid receptor CNR1. Hemopressin-binding efficiently blocks cannabinoid receptor CNR1 and subsequent signaling. This Alces alces alces (European moose) protein is Hemoglobin subunit alpha (HBA).